The primary structure comprises 363 residues: Holliday junction branch migration complex subunit RuvB (363 aa).

A disordered region spans residues 1–32; sequence MSDVERTEFEIPGGIPPRRNGGQGRAADTNVD. The segment at 27–207 is large ATPase domain (RuvB-L); sequence ADTNVDANLK…FGFTAQMEFY (181 aa). ATP is bound by residues L46, R47, G88, K91, T92, T93, 154–156, R197, Y207, and R244; that span reads EDF. Position 92 (T92) interacts with Mg(2+). The interval 208–278 is small ATPAse domain (RuvB-S); that stretch reads DVPDLTKVVK…AANAALIVFD (71 aa). The head domain (RuvB-H) stretch occupies residues 281–363; sequence EVGLDRLDRA…EPPEGTIGDY (83 aa). 2 residues coordinate DNA: R336 and R341.

This sequence belongs to the RuvB family. Homohexamer. Forms an RuvA(8)-RuvB(12)-Holliday junction (HJ) complex. HJ DNA is sandwiched between 2 RuvA tetramers; dsDNA enters through RuvA and exits via RuvB. An RuvB hexamer assembles on each DNA strand where it exits the tetramer. Each RuvB hexamer is contacted by two RuvA subunits (via domain III) on 2 adjacent RuvB subunits; this complex drives branch migration. In the full resolvosome a probable DNA-RuvA(4)-RuvB(12)-RuvC(2) complex forms which resolves the HJ.

It is found in the cytoplasm. The catalysed reaction is ATP + H2O = ADP + phosphate + H(+). Functionally, the RuvA-RuvB-RuvC complex processes Holliday junction (HJ) DNA during genetic recombination and DNA repair, while the RuvA-RuvB complex plays an important role in the rescue of blocked DNA replication forks via replication fork reversal (RFR). RuvA specifically binds to HJ cruciform DNA, conferring on it an open structure. The RuvB hexamer acts as an ATP-dependent pump, pulling dsDNA into and through the RuvAB complex. RuvB forms 2 homohexamers on either side of HJ DNA bound by 1 or 2 RuvA tetramers; 4 subunits per hexamer contact DNA at a time. Coordinated motions by a converter formed by DNA-disengaged RuvB subunits stimulates ATP hydrolysis and nucleotide exchange. Immobilization of the converter enables RuvB to convert the ATP-contained energy into a lever motion, pulling 2 nucleotides of DNA out of the RuvA tetramer per ATP hydrolyzed, thus driving DNA branch migration. The RuvB motors rotate together with the DNA substrate, which together with the progressing nucleotide cycle form the mechanistic basis for DNA recombination by continuous HJ branch migration. Branch migration allows RuvC to scan DNA until it finds its consensus sequence, where it cleaves and resolves cruciform DNA. In Corynebacterium glutamicum (strain R), this protein is Holliday junction branch migration complex subunit RuvB.